Consider the following 264-residue polypeptide: Triosephosphate isomerase (264 aa).

12-14 provides a ligand contact to substrate; the sequence is NWK. H104 (electrophile) is an active-site residue. Catalysis depends on E176, which acts as the Proton acceptor. Substrate contacts are provided by residues G182, S222, and 243–244; that span reads GG.

This sequence belongs to the triosephosphate isomerase family. Homodimer.

It localises to the cytoplasm. It catalyses the reaction D-glyceraldehyde 3-phosphate = dihydroxyacetone phosphate. It participates in carbohydrate biosynthesis; gluconeogenesis. It functions in the pathway carbohydrate degradation; glycolysis; D-glyceraldehyde 3-phosphate from glycerone phosphate: step 1/1. Its function is as follows. Involved in the gluconeogenesis. Catalyzes stereospecifically the conversion of dihydroxyacetone phosphate (DHAP) to D-glyceraldehyde-3-phosphate (G3P). This Bifidobacterium adolescentis (strain ATCC 15703 / DSM 20083 / NCTC 11814 / E194a) protein is Triosephosphate isomerase.